A 264-amino-acid chain; its full sequence is uncharacterized protein (264 aa).

The a divalent metal cation site is built by H7, H9, E102, H138, H163, and D213.

This sequence belongs to the metallo-dependent hydrolases superfamily. TatD-type hydrolase family. The cofactor is a divalent metal cation.

This is an uncharacterized protein from Buchnera aphidicola subsp. Acyrthosiphon pisum (strain APS) (Acyrthosiphon pisum symbiotic bacterium).